Reading from the N-terminus, the 327-residue chain is Protein CONSERVED IN THE GREEN LINEAGE AND DIATOMS 27, chloroplastic (327 aa).

The N-terminal 59 residues, 1 to 59, are a transit peptide targeting the chloroplast; that stretch reads MLRLIVNYPLIPKISHRVCSNSSSKLGSYYDSSSIIKYGGISDVVGKKQELFLSVSVKA. The disordered stretch occupies residues 66-88; the sequence is NGGGSMSFSGQSWDPSSEIEVPS. Transmembrane regions (helical) follow at residues 119–139, 148–168, and 225–245; these read LGGLWLVTFTVLGVPVAAASF, FILAAGTGTLFLVSLIVLRIY, and LIGTGALLVSAFVLFVFATPV.

In terms of tissue distribution, mostly expressed in seeds, leaves and flowers, and, to a lower extent, in roots.

The protein localises to the membrane. It localises to the plastid. The protein resides in the chloroplast. Its function is as follows. Required for growth in low iron conditions. This is Protein CONSERVED IN THE GREEN LINEAGE AND DIATOMS 27, chloroplastic from Arabidopsis thaliana (Mouse-ear cress).